The primary structure comprises 508 residues: Metalloprotease TIKI1 (508 aa).

Positions 1–23 (MVIIWNIFLPAFLLVLAKASLRS) are cleaved as a signal peptide. The Extracellular segment spans residues 24 to 485 (SRDSANCKLN…KYIKAAQSVS (462 aa)). N-linked (GlcNAc...) asparagine glycans are attached at residues asparagine 219, asparagine 228, asparagine 277, and asparagine 335. Residues 486–506 (FSLSIPSAFLLLAWCFQQVAV) form a helical membrane-spanning segment. Residues 507-508 (LQ) are Cytoplasmic-facing.

This sequence belongs to the TIKI family. Requires Mn(2+) as cofactor. The cofactor is Co(2+). As to expression, zygotically expressed in the Spemann-Mangold organizer, in particular in the head Spemann-Mangold organizer region responsible for anterior patterning.

The protein localises to the cell membrane. Metalloprotease that acts as a negative regulator of the Wnt signaling pathway: expressed in the Spemann-Mangold organizer and is required for anterior-neural patterning in head formation in embryos. Acts by mediating the cleavage of the N-terminal residues of a subset of Wnt proteins. Following cleavage, Wnt proteins become oxidized and form large disulfide-bond oligomers, leading to their inactivation. Able to cleave wnt8. The polypeptide is Metalloprotease TIKI1 (trabd2a) (Xenopus tropicalis (Western clawed frog)).